A 182-amino-acid chain; its full sequence is MKHSEESRIRSTTVIGVLRDGKAALGSDGQMTLGNTVVKHSTRKIRSLYQGRLLAGFAGATADALTLLDRFEEKLEAYNGKLERAAVELARDWRTDKYLRRLEAMLAIVSSEKALIISGTGDVIEPEDGIVAIGSGSMYALAAARALMKHTGLHAGEIVQESLRTAADICIYTNDHIVVEEV.

Threonine 12 is a catalytic residue. Positions 167, 170, and 173 each coordinate Na(+).

The protein belongs to the peptidase T1B family. HslV subfamily. In terms of assembly, a double ring-shaped homohexamer of HslV is capped on each side by a ring-shaped HslU homohexamer. The assembly of the HslU/HslV complex is dependent on binding of ATP.

It is found in the cytoplasm. The enzyme catalyses ATP-dependent cleavage of peptide bonds with broad specificity.. Allosterically activated by HslU binding. Its function is as follows. Protease subunit of a proteasome-like degradation complex believed to be a general protein degrading machinery. This chain is ATP-dependent protease subunit HslV, found in Chlorobium phaeovibrioides (strain DSM 265 / 1930) (Prosthecochloris vibrioformis (strain DSM 265)).